A 587-amino-acid polypeptide reads, in one-letter code: Aspartate--tRNA ligase (587 aa).

Glutamate 174 contacts L-aspartate. An aspartate region spans residues 198 to 201 (QITK). Arginine 220 contributes to the L-aspartate binding site. ATP is bound by residues 220–222 (RDE) and glutamine 229. Histidine 443 contacts L-aspartate. Position 477 (glutamate 477) interacts with ATP. Residue arginine 484 coordinates L-aspartate. Position 529 to 532 (529 to 532 (GLDR)) interacts with ATP.

The protein belongs to the class-II aminoacyl-tRNA synthetase family. Type 1 subfamily. As to quaternary structure, homodimer.

It localises to the cytoplasm. The enzyme catalyses tRNA(Asp) + L-aspartate + ATP = L-aspartyl-tRNA(Asp) + AMP + diphosphate. Functionally, catalyzes the attachment of L-aspartate to tRNA(Asp) in a two-step reaction: L-aspartate is first activated by ATP to form Asp-AMP and then transferred to the acceptor end of tRNA(Asp). This is Aspartate--tRNA ligase from Streptococcus pneumoniae serotype 2 (strain D39 / NCTC 7466).